We begin with the raw amino-acid sequence, 408 residues long: LL-diaminopimelate aminotransferase (408 aa).

Substrate-binding residues include Tyr15 and Gly42. Pyridoxal 5'-phosphate is bound by residues Tyr72, 108 to 109 (SK), Tyr132, Asn187, Tyr218, and 246 to 248 (SFS). Lys109, Tyr132, and Asn187 together coordinate substrate. Residue Lys249 is modified to N6-(pyridoxal phosphate)lysine. The pyridoxal 5'-phosphate site is built by Arg257 and Asn292. Residues Asn292 and Arg388 each contribute to the substrate site.

This sequence belongs to the class-I pyridoxal-phosphate-dependent aminotransferase family. LL-diaminopimelate aminotransferase subfamily. As to quaternary structure, homodimer. It depends on pyridoxal 5'-phosphate as a cofactor.

It carries out the reaction (2S,6S)-2,6-diaminopimelate + 2-oxoglutarate = (S)-2,3,4,5-tetrahydrodipicolinate + L-glutamate + H2O + H(+). Its pathway is amino-acid biosynthesis; L-lysine biosynthesis via DAP pathway; LL-2,6-diaminopimelate from (S)-tetrahydrodipicolinate (aminotransferase route): step 1/1. Functionally, involved in the synthesis of meso-diaminopimelate (m-DAP or DL-DAP), required for both lysine and peptidoglycan biosynthesis. Catalyzes the direct conversion of tetrahydrodipicolinate to LL-diaminopimelate. The sequence is that of LL-diaminopimelate aminotransferase from Synechococcus sp. (strain CC9311).